A 120-amino-acid polypeptide reads, in one-letter code: Large ribosomal subunit protein uL18 (120 aa).

It belongs to the universal ribosomal protein uL18 family. Part of the 50S ribosomal subunit; part of the 5S rRNA/L5/L18/L25 subcomplex. Contacts the 5S and 23S rRNAs.

Its function is as follows. This is one of the proteins that bind and probably mediate the attachment of the 5S RNA into the large ribosomal subunit, where it forms part of the central protuberance. The protein is Large ribosomal subunit protein uL18 of Acidiphilium cryptum (strain JF-5).